Here is a 288-residue protein sequence, read N- to C-terminus: Probable aquaporin PIP2-2 (288 aa).

Residues 1 to 21 (MAKDIEASAPEGGEFSAKDYT) are disordered. The next 2 helical transmembrane spans lie at 42–62 (AVIA…ATVI) and 81–101 (GVGI…LVYC). Residues 111–113 (NPA) carry the NPA 1 motif. Transmembrane regions (helical) follow at residues 130–150 (VLYI…VKGF), 172–192 (GTGL…VFSA), and 204–224 (IPVL…LATI). Positions 232-234 (NPA) match the NPA 2 motif. A helical membrane pass occupies residues 254–274 (IFWVGPLIGAAIAAAYHQYVL).

Belongs to the MIP/aquaporin (TC 1.A.8) family. PIP (TC 1.A.8.11) subfamily. In terms of tissue distribution, expressed in roots, leaves and anthers.

Its subcellular location is the cell membrane. In terms of biological role, aquaporins facilitate the transport of water and small neutral solutes across cell membranes. The protein is Probable aquaporin PIP2-2 (PIP2-2) of Oryza sativa subsp. japonica (Rice).